Here is a 236-residue protein sequence, read N- to C-terminus: Phosphoribosylaminoimidazole-succinocarboxamide synthase (236 aa).

The protein belongs to the SAICAR synthetase family.

It carries out the reaction 5-amino-1-(5-phospho-D-ribosyl)imidazole-4-carboxylate + L-aspartate + ATP = (2S)-2-[5-amino-1-(5-phospho-beta-D-ribosyl)imidazole-4-carboxamido]succinate + ADP + phosphate + 2 H(+). It functions in the pathway purine metabolism; IMP biosynthesis via de novo pathway; 5-amino-1-(5-phospho-D-ribosyl)imidazole-4-carboxamide from 5-amino-1-(5-phospho-D-ribosyl)imidazole-4-carboxylate: step 1/2. The chain is Phosphoribosylaminoimidazole-succinocarboxamide synthase from Rickettsia typhi (strain ATCC VR-144 / Wilmington).